Reading from the N-terminus, the 226-residue chain is UPF0173 metal-dependent hydrolase Tpet_1587 (226 aa).

It belongs to the UPF0173 family.

This is UPF0173 metal-dependent hydrolase Tpet_1587 from Thermotoga petrophila (strain ATCC BAA-488 / DSM 13995 / JCM 10881 / RKU-1).